The sequence spans 473 residues: Hyaluronidase-2 (473 aa).

Residues 1-20 (MRAGPGPTVTLALVLAVSWA) form the signal peptide. Intrachain disulfides connect Cys47–Cys340 and Cys211–Cys227. 2 N-linked (GlcNAc...) asparagine glycosylation sites follow: Asn74 and Asn103. Glu135 acts as the Proton donor in catalysis. Residue Asn357 is glycosylated (N-linked (GlcNAc...) asparagine). The EGF-like domain maps to 361 to 439 (ATQYCSRAQC…YLGWSGEQCQ (79 aa)). 3 disulfides stabilise this stretch: Cys365-Cys376, Cys370-Cys427, and Cys429-Cys438. A lipid anchor (GPI-anchor amidated glycine) is attached at Gly448. Positions 449–473 (ASEAWAGSHLTSLLALAALAFTWTL) are cleaved as a propeptide — removed in mature form.

This sequence belongs to the glycosyl hydrolase 56 family. In terms of assembly, interacts with MST1R. As to expression, widely expressed (at protein level).

It is found in the cell membrane. The enzyme catalyses Random hydrolysis of (1-&gt;4)-linkages between N-acetyl-beta-D-glucosamine and D-glucuronate residues in hyaluronate.. Catalyzes hyaluronan degradation into small fragments that are endocytosed and degraded in lysosomes by HYAL1 and exoglycosidases. Essential for the breakdown of extracellular matrix hyaluronan. The sequence is that of Hyaluronidase-2 (HYAL2) from Homo sapiens (Human).